The following is a 154-amino-acid chain: Ascorbate-specific PTS system EIIA component (154 aa).

Positions 6–150 (SLAENNSIRL…QEVLDLIDRT (145 aa)) constitute a PTS EIIA type-2 domain. Residue His-68 is the Tele-phosphohistidine intermediate of the active site. His-68 bears the Phosphohistidine mark.

The protein localises to the cytoplasm. Its function is as follows. The phosphoenolpyruvate-dependent sugar phosphotransferase system (sugar PTS), a major carbohydrate active transport system, catalyzes the phosphorylation of incoming sugar substrates concomitantly with their translocation across the cell membrane. The enzyme II UlaABC PTS system is involved in ascorbate transport. The chain is Ascorbate-specific PTS system EIIA component (ulaC) from Salmonella typhi.